A 261-amino-acid chain; its full sequence is Non-structural protein 2a (261 aa).

It belongs to the coronaviruses ns2a protein family.

It localises to the host cytoplasm. Its function is as follows. Not essential for virus replication in transformed murine cells. This is Non-structural protein 2a from Mus musculus (Mouse).